A 1205-amino-acid polypeptide reads, in one-letter code: A disintegrin and metalloproteinase with thrombospondin motifs 3 (1205 aa).

A signal peptide spans 1–20 (MVLLSLWLIAAALVEVRTSA). A propeptide spanning residues 21–249 (DGQAGNEEMV…QLNETMRRRR (229 aa)) is cleaved from the precursor. 4 N-linked (GlcNAc...) asparagine glycosylation sites follow: N83, N119, N242, and N345. Residues 256-460 (YNIEVLLGVD…HSYDCLLDDP (205 aa)) form the Peptidase M12B domain. Cystine bridges form between C333-C382, C376-C455, and C415-C441. A Zn(2+)-binding site is contributed by H398. Residue E399 is part of the active site. Residues H402 and H408 each coordinate Zn(2+). The Disintegrin domain occupies 470 to 550 (ELPGINYSMD…MWKNANQQKQ (81 aa)). N475 carries an N-linked (GlcNAc...) asparagine glycan. Intrachain disulfides connect C482-C507, C493-C516, C502-C535, C529-C540, C563-C600, C567-C605, and C578-C590. The region spanning 551–606 (DGNWGSWTKFGSCSRTCGTGVRFRTRQCNNPMPINGGQDCPGVNFEYQLCNTEECQ) is the TSP type-1 1 domain. The tract at residues 713 to 844 (RTVKGTFTRT…NSNNVIQEEL (132 aa)) is spacer. N814 carries an N-linked (GlcNAc...) asparagine glycan. TSP type-1 domains are found at residues 845 to 905 (DTFE…QECT), 906 to 965 (HPLW…NRVP), and 966 to 1014 (CPAQ…QLPP). The N-linked (GlcNAc...) asparagine glycan is linked to N942. Intrachain disulfides connect C978–C1010, C982–C1015, and C993–C999. The PLAC domain occupies 1015 to 1054 (CNDEPCLGDKSIFCQMEVLARYCSIPGYNKLCCESCSKRS). The segment at 1174–1205 (DSIGASSQARTSKKDGKIIDNRRPTRSSTLER) is disordered. The segment covering 1185–1205 (SKKDGKIIDNRRPTRSSTLER) has biased composition (basic and acidic residues).

Requires Zn(2+) as cofactor. The precursor is cleaved by a furin endopeptidase. Post-translationally, glycosylated. Can be O-fucosylated by POFUT2 on a serine or a threonine residue found within the consensus sequence C1-X(2)-(S/T)-C2-G of the TSP type-1 repeat domains where C1 and C2 are the first and second cysteine residue of the repeat, respectively. Fucosylated repeats can then be further glycosylated by the addition of a beta-1,3-glucose residue by the glucosyltransferase, B3GALTL. Fucosylation mediates the efficient secretion of ADAMTS family members. Can also be C-glycosylated with one or two mannose molecules on tryptophan residues within the consensus sequence W-X-X-W of the TPRs, and N-glycosylated. These other glycosylations can also facilitate secretion. As to expression, found in cartilage and skin.

It localises to the secreted. The protein localises to the extracellular space. Its subcellular location is the extracellular matrix. Functionally, cleaves the propeptides of type II collagen prior to fibril assembly. Does not act on types I and III collagens. In Homo sapiens (Human), this protein is A disintegrin and metalloproteinase with thrombospondin motifs 3 (ADAMTS3).